The following is a 312-amino-acid chain: Atrochrysone carboxyl ACP thioesterase AacuM (312 aa).

Positions 103, 105, 107, and 108 each coordinate Zn(2+). Catalysis depends on Asp107, which acts as the Proton donor/acceptor.

The protein belongs to the metallo-beta-lactamase superfamily. Zn(2+) is required as a cofactor.

The enzyme catalyses atrochrysone carboxyl-[ACP] + H2O = atrochrysone carboxylate + holo-[ACP] + H(+). Its pathway is secondary metabolite biosynthesis. In terms of biological role, atrochrysone carboxyl ACP thioesterase; part of the gene cluster that mediates the biosynthesis of the tetrahydroxanthone dimer secalonic acid D. The pathway begins with the synthesis of atrochrysone thioester by the polyketide synthase AacuL. The atrochrysone carboxyl ACP thioesterase AacuM then breaks the thioester bond and releases the atrochrysone carboxylic acid from AacuL. Atrochrysone carboxylic acid is decarboxylated by the decarboxylase AacuI, and oxidized by the anthrone oxygenase AacuG to yield emodin. Emodin is then reduced to emodin hydroquinone by a yet unidentified oxidoreductase. A-ring reduction by the short chain dehydrogenase AacuN, dehydration by the scytalone dehydratase-like protein AacuK and probable spontaneous re-oxidation, results in overall deoxygenation to chrysophanol. Baeyer-Villiger oxidation by the Baeyer-Villiger monooxygenase (BVMO) AacuH then yields monodictyphenone. Monodictyphenone is transformed into compounds with the tetrahydroxanthone skeleton via methylesterification by the methyltransferase AacuQ, followed by the action of the flavin-dependent monooxygenase AacuC, the isomerase AacuP, and the short chain dehydrogenase/reductase AacuF or AacuD. AacuF and AacuD should accept the same compound as a substrate but perform the ketoreduction with a different stereoselectivity, thus yielding blennolides B and A, respectively. In the final step of the biosynthesis, the cytochrome P450 monooxygenase AacuE accepts blennolide B and/or blennolide A to conduct the dimerization reaction to furnish the tetrahydroxanthone dimers, secalonic acids D, B, and F. This chain is Atrochrysone carboxyl ACP thioesterase AacuM, found in Aspergillus aculeatus (strain ATCC 16872 / CBS 172.66 / WB 5094).